The following is a 1049-amino-acid chain: Retinoblastoma-like protein 1 (1049 aa).

A phosphothreonine mark is found at T332, T369, and T385. A domain A region spans residues 385-584; that stretch reads TPVASATQSV…WEALRASANK (200 aa). Positions 385 to 944 are pocket; binds T and E1A; sequence TPVASATQSV…GRVKSFALKY (560 aa). A spacer region spans residues 585 to 779; sequence VPSCEEVIFP…TQDAPLTGIS (195 aa). Phosphoserine is present on residues S640, S650, S748, and S761. A domain B region spans residues 780 to 944; that stretch reads KPKRTGSLAL…GRVKSFALKY (165 aa). Phosphoserine occurs at positions 959, 970, and 983. At T992 the chain carries Phosphothreonine. Phosphoserine is present on residues S1004 and S1022.

It belongs to the retinoblastoma protein (RB) family. As to quaternary structure, component of the DREAM complex (also named LINC complex) at least composed of E2F4, E2F5, LIN9, LIN37, LIN52, LIN54, MYBL1, MYBL2, RBL1, RBL2, RBBP4, TFDP1 and TFDP2. The complex exists in quiescent cells where it represses cell cycle-dependent genes. It dissociates in S phase when LIN9, LIN37, LIN52 and LIN54 form a subcomplex that binds to MYBL2. Interacts with AATF. Interacts with KDM5A. Interacts with KMT5B and KMT5C. Interacts with USP4. Interacts with RBBP9. Cell-cycle arrest properties are inactivated by phosphorylation on Thr-332, Ser-640, Ser-959 and Ser-970 by CDK4.

It localises to the nucleus. In terms of biological role, key regulator of entry into cell division. Directly involved in heterochromatin formation by maintaining overall chromatin structure and, in particular, that of constitutive heterochromatin by stabilizing histone methylation. Recruits and targets histone methyltransferases KMT5B and KMT5C, leading to epigenetic transcriptional repression. Controls histone H4 'Lys-20' trimethylation. Probably acts as a transcription repressor by recruiting chromatin-modifying enzymes to promoters. Potent inhibitor of E2F-mediated trans-activation. May act as a tumor suppressor. The polypeptide is Retinoblastoma-like protein 1 (Rattus norvegicus (Rat)).